A 373-amino-acid polypeptide reads, in one-letter code: Chaperone protein DnaJ (373 aa).

Residues 5–70 enclose the J domain; that stretch reads DFYATLGVAR…EKRAMYDQYG (66 aa). The segment at 134–212 adopts a CR-type zinc-finger fold; sequence GVKKRINIPT…CRGAGRNKAV (79 aa). Zn(2+) contacts are provided by Cys147, Cys150, Cys164, Cys167, Cys186, Cys189, Cys200, and Cys203. CXXCXGXG motif repeat units lie at residues 147-154, 164-171, 186-193, and 200-207; these read CDVCNGSG, CPTCKGSG, CPTCHGAG, and CVKCRGAG.

The protein belongs to the DnaJ family. Homodimer. Requires Zn(2+) as cofactor.

Its subcellular location is the cytoplasm. In terms of biological role, participates actively in the response to hyperosmotic and heat shock by preventing the aggregation of stress-denatured proteins and by disaggregating proteins, also in an autonomous, DnaK-independent fashion. Unfolded proteins bind initially to DnaJ; upon interaction with the DnaJ-bound protein, DnaK hydrolyzes its bound ATP, resulting in the formation of a stable complex. GrpE releases ADP from DnaK; ATP binding to DnaK triggers the release of the substrate protein, thus completing the reaction cycle. Several rounds of ATP-dependent interactions between DnaJ, DnaK and GrpE are required for fully efficient folding. Also involved, together with DnaK and GrpE, in the DNA replication of plasmids through activation of initiation proteins. The sequence is that of Chaperone protein DnaJ from Neisseria meningitidis serogroup C (strain 053442).